An 80-amino-acid chain; its full sequence is U-actitoxin-Avd9a (80 aa).

The N-terminal stretch at 1–20 (MNLKVLAVFVLCAILVVVTA) is a signal peptide. Residues 21 to 39 (ERRGTETGVYKKDTLQDLI) constitute a propeptide that is removed on maturation. The ShKT domain maps to 45-80 (CIDRFPTGTCKQVKKGGSCKNSDKYRMNCRKTCGLC). 3 disulfide bridges follow: Cys45–Cys80, Cys54–Cys73, and Cys63–Cys77. A crucial for binding to potassium channels region spans residues 68-69 (KY).

Belongs to the sea anemone type 1 potassium channel toxin family. Type 1b subfamily.

The protein localises to the secreted. It is found in the nematocyst. In terms of biological role, inhibits voltage-gated potassium channels (Kv1/KCNA). This Anemonia viridis (Snakelocks anemone) protein is U-actitoxin-Avd9a.